We begin with the raw amino-acid sequence, 332 residues long: MTSDSFLAPHIPVLLDEVIEALSPVEGGIYIDGTFGAGGYSRAILEKADTQVIAFDRDPDAIREGASLVEKYKGRLRLVNDCFSNIGHHLDALDIKTVDGMVFDIGVSSMQIDRPERGFSIQADGPLDMRMAQAGLSAEEFLNNAQEKDIADVLYLYGEERQSRRVARAIVAARPLTTTFQLAKVIRQSLGYRPFDKKDPAAHCFQAIRIHLNRELDELKDGLQTAERFLKTKGCLAVVTFHSLEDRIVKHFMREHAGQTGQVSRHQPVIPQQNPVFFSKPARPVRAGETELARNPRARSATLRAVYRTETPFSEDISRPDTHIPRSRRQSA.

S-adenosyl-L-methionine is bound by residues 38-40, Asp-56, Phe-83, Asp-104, and Gln-111; that span reads GGY. Positions 309–332 are disordered; it reads TETPFSEDISRPDTHIPRSRRQSA.

It belongs to the methyltransferase superfamily. RsmH family.

Its subcellular location is the cytoplasm. It carries out the reaction cytidine(1402) in 16S rRNA + S-adenosyl-L-methionine = N(4)-methylcytidine(1402) in 16S rRNA + S-adenosyl-L-homocysteine + H(+). Functionally, specifically methylates the N4 position of cytidine in position 1402 (C1402) of 16S rRNA. In Zymomonas mobilis subsp. mobilis (strain ATCC 31821 / ZM4 / CP4), this protein is Ribosomal RNA small subunit methyltransferase H.